We begin with the raw amino-acid sequence, 382 residues long: Sphingoid long-chain base transporter RSB1 (382 aa).

The Extracellular segment spans residues M1–R34. N-linked (GlcNAc...) asparagine glycosylation is found at N3 and N6. A helical transmembrane segment spans residues F35–L55. The Cytoplasmic portion of the chain corresponds to M56 to R57. A helical transmembrane segment spans residues Q58–G78. Residues R79 to D90 are Extracellular-facing. The helical transmembrane segment at A91–Y111 threads the bilayer. The Cytoplasmic segment spans residues Y112–S135. A helical transmembrane segment spans residues F136–C156. Topologically, residues G157 to H171 are extracellular. The chain crosses the membrane as a helical span at residues V172 to F192. Residues H193–R241 are Cytoplasmic-facing. A helical transmembrane segment spans residues W242–C262. Topologically, residues C263–E281 are extracellular. Residues W282–F302 traverse the membrane as a helical segment. Over H303 to L382 the chain is Cytoplasmic.

The protein belongs to the lipid-translocating exporter (LTE) (TC 9.A.26.1) family.

The protein localises to the cell membrane. Functionally, catalyzes the ATP-dependent translocation of sphingoid long-chain bases (LCBs) from the cytoplasmic site toward the extracytoplasmic side of the membrane (flip-flop). Involved in the establishment of the functional lipid asymmetry of the plasma membrane. Regulates intracellular levels of LCBs, sphingolipid precursors that are growth inhibitory at increased levels. This chain is Sphingoid long-chain base transporter RSB1 (RSB1), found in Saccharomyces cerevisiae (strain JAY291) (Baker's yeast).